We begin with the raw amino-acid sequence, 183 residues long: Ferritin heavy chain (183 aa).

Met-1 bears the N-acetylmethionine mark. Thr-2 is subject to N-acetylthreonine; in Ferritin heavy chain, N-terminally processed. One can recognise a Ferritin-like diiron domain in the interval Gln-11 to Gly-160. Residues Glu-28, Glu-63, His-66, Glu-108, and Gln-142 each contribute to the Fe cation site. Residues Ser-179 and Ser-183 each carry the phosphoserine modification.

This sequence belongs to the ferritin family. In terms of assembly, oligomer of 24 subunits. There are two types of subunits: L (light) chain and H (heavy) chain. The major chain can be light or heavy, depending on the species and tissue type. The functional molecule forms a roughly spherical shell with a diameter of 12 nm and contains a central cavity into which the insoluble mineral iron core is deposited. Interacts with NCOA4; NCOA4 promotes targeting of the iron-binding ferritin complex to autolysosomes following starvation or iron depletion. As to expression, ubiquitous.

Its subcellular location is the cytoplasm. The protein resides in the lysosome. It is found in the cytoplasmic vesicle. The protein localises to the autophagosome. It catalyses the reaction 4 Fe(2+) + O2 + 4 H(+) = 4 Fe(3+) + 2 H2O. Functionally, stores iron in a soluble, non-toxic, readily available form. Important for iron homeostasis. Has ferroxidase activity. Iron is taken up in the ferrous form and deposited as ferric hydroxides after oxidation. Also plays a role in delivery of iron to cells. Mediates iron uptake in capsule cells of the developing kidney. Delivery to lysosomes is mediated by the cargo receptor NCOA4 for autophagic degradation and release of iron. In Trichosurus vulpecula (Brush-tailed possum), this protein is Ferritin heavy chain (FTH1).